The sequence spans 364 residues: MALFNSAHGGNIREAATVLGISPDQLLDFSANINPLGMPVSVKRALIDNLDCIERYPDADYFHLHQALARHHQVPASWILAGNGETESIFTVASGLKPRRAMIVTPGFAEYGRALAQSGCEIRRWSLREADGWQLTDAILEALTPDLDCLFLCTPNNPTGLLPERPLLQAIADRCKSLNINLILDEAFIDFIPHETGFIPALKDNPHIWVLRSLTKFYAIPGLRLGYLVNSDDAAMARMRRQQMPWSVNALAALAGEVALQDSAWQQATWHWLREEGARFYQALCQLPLLTVYPGRANYLLLRCEREDIDLQRRLLTQRILIRSCANYPGLDSRYYRVAIRSAAQNERLLAALRNVLTGIAPAD.

O-phospho-L-threonine contacts are provided by residues H8–G9, N32, and N157. Position 216 is an N6-(pyridoxal phosphate)lysine (K216). R323 and R337 together coordinate O-phospho-L-threonine.

The protein belongs to the class-II pyridoxal-phosphate-dependent aminotransferase family. As to quaternary structure, homodimer. It depends on pyridoxal 5'-phosphate as a cofactor.

It carries out the reaction O-phospho-L-threonine + H(+) = (R)-1-aminopropan-2-yl phosphate + CO2. The protein operates within cofactor biosynthesis; adenosylcobalamin biosynthesis. Its function is as follows. Decarboxylates L-threonine-O-3-phosphate to yield (R)-1-amino-2-propanol O-2-phosphate, the precursor for the linkage between the nucleotide loop and the corrin ring in cobalamin. The chain is Threonine-phosphate decarboxylase (cobD) from Salmonella typhimurium (strain LT2 / SGSC1412 / ATCC 700720).